The chain runs to 192 residues: Probable nicotinate-nucleotide adenylyltransferase (192 aa).

This sequence belongs to the NadD family.

The catalysed reaction is nicotinate beta-D-ribonucleotide + ATP + H(+) = deamido-NAD(+) + diphosphate. It functions in the pathway cofactor biosynthesis; NAD(+) biosynthesis; deamido-NAD(+) from nicotinate D-ribonucleotide: step 1/1. Functionally, catalyzes the reversible adenylation of nicotinate mononucleotide (NaMN) to nicotinic acid adenine dinucleotide (NaAD). The polypeptide is Probable nicotinate-nucleotide adenylyltransferase (Rhizobium leguminosarum bv. trifolii (strain WSM2304)).